The sequence spans 464 residues: tRNA modification GTPase MnmE (464 aa).

Residues arginine 25, glutamate 87, and lysine 130 each contribute to the (6S)-5-formyl-5,6,7,8-tetrahydrofolate site. Residues 226–386 (GLSVVLAGQP…LRAELLRIAG (161 aa)) enclose the TrmE-type G domain. Asparagine 236 lines the K(+) pocket. Residues 236-241 (NVGKSS), 255-261 (TPIAGTT), and 280-283 (DTAG) contribute to the GTP site. Serine 240 serves as a coordination point for Mg(2+). Positions 255, 257, and 260 each coordinate K(+). Threonine 261 provides a ligand contact to Mg(2+). Lysine 464 is a binding site for (6S)-5-formyl-5,6,7,8-tetrahydrofolate.

Belongs to the TRAFAC class TrmE-Era-EngA-EngB-Septin-like GTPase superfamily. TrmE GTPase family. As to quaternary structure, homodimer. Heterotetramer of two MnmE and two MnmG subunits. Requires K(+) as cofactor.

Its subcellular location is the cytoplasm. Exhibits a very high intrinsic GTPase hydrolysis rate. Involved in the addition of a carboxymethylaminomethyl (cmnm) group at the wobble position (U34) of certain tRNAs, forming tRNA-cmnm(5)s(2)U34. The sequence is that of tRNA modification GTPase MnmE from Burkholderia ambifaria (strain MC40-6).